The following is a 284-amino-acid chain: uncharacterized protein (284 aa).

FMN is bound at residue Q54. The active-site Proton donor is the C83. FMN contacts are provided by residues K125, H153, 183-185, and 207-208; these read NGG and AN.

This sequence belongs to the Dus family. It depends on FMN as a cofactor.

Functionally, catalyzes the synthesis of dihydrouridine, a modified base found in the D-loop of most tRNAs. This is an uncharacterized protein from Caenorhabditis elegans.